We begin with the raw amino-acid sequence, 446 residues long: 3-phosphoshikimate 1-carboxyvinyltransferase (446 aa).

3 residues coordinate 3-phosphoshikimate: Lys-21, Ser-22, and Arg-26. Lys-21 serves as a coordination point for phosphoenolpyruvate. Residues Gly-94 and Arg-122 each contribute to the phosphoenolpyruvate site. Positions 167, 169, 315, and 342 each coordinate 3-phosphoshikimate. Gln-169 is a phosphoenolpyruvate binding site. Asp-315 acts as the Proton acceptor in catalysis. Positions 346 and 388 each coordinate phosphoenolpyruvate.

It belongs to the EPSP synthase family. In terms of assembly, monomer.

It is found in the cytoplasm. The enzyme catalyses 3-phosphoshikimate + phosphoenolpyruvate = 5-O-(1-carboxyvinyl)-3-phosphoshikimate + phosphate. It functions in the pathway metabolic intermediate biosynthesis; chorismate biosynthesis; chorismate from D-erythrose 4-phosphate and phosphoenolpyruvate: step 6/7. In terms of biological role, catalyzes the transfer of the enolpyruvyl moiety of phosphoenolpyruvate (PEP) to the 5-hydroxyl of shikimate-3-phosphate (S3P) to produce enolpyruvyl shikimate-3-phosphate and inorganic phosphate. This chain is 3-phosphoshikimate 1-carboxyvinyltransferase, found in Alkalilimnicola ehrlichii (strain ATCC BAA-1101 / DSM 17681 / MLHE-1).